A 138-amino-acid chain; its full sequence is Nucleoside diphosphate kinase (138 aa).

Positions 11, 59, 87, 93, 104, and 114 each coordinate ATP. The Pros-phosphohistidine intermediate role is filled by histidine 117.

The protein belongs to the NDK family. Mg(2+) serves as cofactor.

The protein localises to the cytoplasm. The catalysed reaction is a 2'-deoxyribonucleoside 5'-diphosphate + ATP = a 2'-deoxyribonucleoside 5'-triphosphate + ADP. It catalyses the reaction a ribonucleoside 5'-diphosphate + ATP = a ribonucleoside 5'-triphosphate + ADP. Major role in the synthesis of nucleoside triphosphates other than ATP. The ATP gamma phosphate is transferred to the NDP beta phosphate via a ping-pong mechanism, using a phosphorylated active-site intermediate. The protein is Nucleoside diphosphate kinase of Saccharolobus solfataricus (strain ATCC 35092 / DSM 1617 / JCM 11322 / P2) (Sulfolobus solfataricus).